A 253-amino-acid polypeptide reads, in one-letter code: Phosphonates import ATP-binding protein PhnC (253 aa).

In terms of domain architecture, ABC transporter spans 4–247; sequence VRFEGVTKRF…QAVAMIYRAG (244 aa). 36 to 43 is an ATP binding site; that stretch reads GLSGSGKS.

Belongs to the ABC transporter superfamily. Phosphonates importer (TC 3.A.1.9.1) family. The complex is composed of two ATP-binding proteins (PhnC), two transmembrane proteins (PhnE) and a solute-binding protein (PhnD).

The protein localises to the cell membrane. The enzyme catalyses phosphonate(out) + ATP + H2O = phosphonate(in) + ADP + phosphate + H(+). Its function is as follows. Part of the ABC transporter complex PhnCDE involved in phosphonates import. Responsible for energy coupling to the transport system. The protein is Phosphonates import ATP-binding protein PhnC of Frankia casuarinae (strain DSM 45818 / CECT 9043 / HFP020203 / CcI3).